The chain runs to 873 residues: Leucine--tRNA ligase (873 aa).

A 'HIGH' region motif is present at residues 42 to 52 (PYPSGKLHMGH). The short motif at 628–632 (KMSKS) is the 'KMSKS' region element. Lysine 631 is a binding site for ATP.

The protein belongs to the class-I aminoacyl-tRNA synthetase family.

The protein resides in the cytoplasm. It catalyses the reaction tRNA(Leu) + L-leucine + ATP = L-leucyl-tRNA(Leu) + AMP + diphosphate. This Azoarcus sp. (strain BH72) protein is Leucine--tRNA ligase.